Here is a 329-residue protein sequence, read N- to C-terminus: MTTYPVPQNPLLLRVLRLMDAFSKSDDERDFYLDRVEGFIFYIDLDKDQEDLDKIYQELEENADRYCLIPKLTFYEIKKIMETFVNEKIYDIDTKEKFLEIVQSKNAREQFLEFLYDHETEQEKWQQFYVERSRIRIIEWLRNNQFQFVFEEDLDFSKHILEQLKVHLFDAKVSKELTQARQLLLNKSKVYYSNEALNPRPKRGRPPKQSAKVEAETTISSDIYTKVPSVARRFLFLPEITSPSSLTFSEKFDTEEEFLAHLRGGGRLEDQLNLAKFSERFDSLRELSAKLGYDSDGETGDFFDEEYDDEEEEIKPKKTTKRGRKKSRS.

Residues Gly-292–Ser-329 are disordered. The segment covering Ser-295–Glu-313 has biased composition (acidic residues). Residues Lys-317–Ser-329 are compositionally biased toward basic residues.

It belongs to the UPF0158 family.

The polypeptide is UPF0158 protein CT_429 (Chlamydia trachomatis serovar D (strain ATCC VR-885 / DSM 19411 / UW-3/Cx)).